The following is a 305-amino-acid chain: Dermonecrotic toxin LiSicTox-alphaIA2aiii (305 aa).

The N-terminal stretch at 1–17 (LPYIALILVCWSVLSQA) is a signal peptide. Residues 18–25 (AQTDVEER) constitute a propeptide that is removed on maturation. His-37 is a catalytic residue. 2 residues coordinate Mg(2+): Glu-57 and Asp-59. His-73 serves as the catalytic Nucleophile. Disulfide bonds link Cys-77/Cys-83 and Cys-79/Cys-222. Asp-117 provides a ligand contact to Mg(2+). N-linked (GlcNAc...) asparagine glycosylation is present at Asn-282.

Belongs to the arthropod phospholipase D family. Class II subfamily. Mg(2+) serves as cofactor. In terms of tissue distribution, expressed by the venom gland.

The protein resides in the secreted. The catalysed reaction is an N-(acyl)-sphingosylphosphocholine = an N-(acyl)-sphingosyl-1,3-cyclic phosphate + choline. The enzyme catalyses an N-(acyl)-sphingosylphosphoethanolamine = an N-(acyl)-sphingosyl-1,3-cyclic phosphate + ethanolamine. It carries out the reaction a 1-acyl-sn-glycero-3-phosphocholine = a 1-acyl-sn-glycero-2,3-cyclic phosphate + choline. It catalyses the reaction a 1-acyl-sn-glycero-3-phosphoethanolamine = a 1-acyl-sn-glycero-2,3-cyclic phosphate + ethanolamine. Functionally, dermonecrotic toxins cleave the phosphodiester linkage between the phosphate and headgroup of certain phospholipids (sphingolipid and lysolipid substrates), forming an alcohol (often choline) and a cyclic phosphate. This toxin acts on sphingomyelin (SM). It may also act on ceramide phosphoethanolamine (CPE), lysophosphatidylcholine (LPC) and lysophosphatidylethanolamine (LPE), but not on lysophosphatidylserine (LPS), and lysophosphatidylglycerol (LPG). It acts by transphosphatidylation, releasing exclusively cyclic phosphate products as second products. Induces dermonecrosis, hemolysis, increased vascular permeability, edema, inflammatory response, and platelet aggregation. This chain is Dermonecrotic toxin LiSicTox-alphaIA2aiii, found in Loxosceles intermedia (Brown spider).